The following is a 260-amino-acid chain: Shikimate dehydrogenase (260 aa).

Catalysis depends on Lys-71, which acts as the Proton acceptor. Residue Gly-124–Ala-128 participates in NADP(+) binding.

This sequence belongs to the shikimate dehydrogenase family.

The enzyme catalyses shikimate + NADP(+) = 3-dehydroshikimate + NADPH + H(+). The protein operates within metabolic intermediate biosynthesis; chorismate biosynthesis; chorismate from D-erythrose 4-phosphate and phosphoenolpyruvate: step 4/7. In Sulfurisphaera tokodaii (strain DSM 16993 / JCM 10545 / NBRC 100140 / 7) (Sulfolobus tokodaii), this protein is Shikimate dehydrogenase (aroE).